We begin with the raw amino-acid sequence, 377 residues long: D-alanine--D-alanine ligase (377 aa).

An ATP-grasp domain is found at Lys140 to Asp349. An ATP-binding site is contributed by Val170 to Leu225. Asp303, Glu316, and Asn318 together coordinate Mg(2+).

It belongs to the D-alanine--D-alanine ligase family. Requires Mg(2+) as cofactor. The cofactor is Mn(2+).

It is found in the cytoplasm. The catalysed reaction is 2 D-alanine + ATP = D-alanyl-D-alanine + ADP + phosphate + H(+). The protein operates within cell wall biogenesis; peptidoglycan biosynthesis. Cell wall formation. In Leuconostoc mesenteroides, this protein is D-alanine--D-alanine ligase.